A 363-amino-acid polypeptide reads, in one-letter code: Translocating chain-associated membrane protein 1-like 1 (363 aa).

The Cytoplasmic portion of the chain corresponds to 1-29 (MGLRKKNARNPPVLSHEFMVQNHADMVSC). Residues 30 to 50 (VGMFFVLGLMFEGTSEMSIAF) form a helical membrane-spanning segment. Topologically, residues 51–80 (LTLQHGVVVPAEGLPSGSRTLYHYGVKDLA) are lumenal. A helical transmembrane segment spans residues 81 to 101 (TVFFYMLVAIIIHATIQEYVL). The Cytoplasmic portion of the chain corresponds to 102–120 (DKLSRRLQLTKGKQNKLNE). Positions 116 to 324 (NKLNEAGQLS…TVWLQRWLED (209 aa)) constitute a TLC domain. Residues 121-141 (AGQLSVFYIVSGIWGMIILAS) traverse the membrane as a helical segment. Residues 142–159 (ENCLSDPTLLWKSQPHNM) lie on the Lumenal side of the membrane. The chain crosses the membrane as a helical span at residues 160 to 179 (MTFQMKFFYISQLAYWFHSF). Over 180–191 (PELYFQKVRKQD) the chain is Cytoplasmic. The helical transmembrane segment at 192-214 (IPGQLIYIGLHLFHIGGAYLLYL) threads the bilayer. The Lumenal segment spans residues 215–218 (NHLG). The chain crosses the membrane as a helical span at residues 219–241 (LLLLMLHYAVELLSSVCSLLYFG). Residues 242 to 250 (DERYQKGLS) lie on the Cytoplasmic side of the membrane. A helical membrane pass occupies residues 251–271 (LWPIVFISGRLVTLIVSVVTV). Residues 272–295 (GLHLAGTNRNGNALSGNVNVLAAK) lie on the Lumenal side of the membrane. The helical transmembrane segment at 296 to 316 (IAVLSSSCSIQVYITWTLTTV) threads the bilayer. The Cytoplasmic segment spans residues 317–363 (WLQRWLEDANLHVCGRKRRSRARKGTENGVENPNRIDSPPKKKEKAP). The interval 338–363 (ARKGTENGVENPNRIDSPPKKKEKAP) is disordered. Positions 354–363 (SPPKKKEKAP) are enriched in basic and acidic residues.

Belongs to the TRAM family.

It is found in the endoplasmic reticulum membrane. Its function is as follows. Stimulatory or required for the translocation of secretory proteins across the ER membrane. This Mus musculus (Mouse) protein is Translocating chain-associated membrane protein 1-like 1 (Tram1l1).